The following is a 269-amino-acid chain: Gene 51 glycoprotein (269 aa).

N53, N58, N74, and N78 each carry an N-linked (GlcNAc...) asparagine; by host glycan. Disordered stretches follow at residues 67–87 (LSTS…TTPY) and 103–137 (MLNS…ASKN). The span at 76 to 87 (TSNTSYSQTTPY) shows a compositional bias: low complexity. Polar residues predominate over residues 103-112 (MLNSTPNKPL). Positions 113–136 (SSTKLTPKSQSSSQSTKTTKQASK) are enriched in low complexity. 4 N-linked (GlcNAc...) asparagine; by host glycosylation sites follow: N137, N161, N170, and N191.

This is Gene 51 glycoprotein (51) from Saimiriine herpesvirus 2 (strain 11) (SaHV-2).